The following is a 363-amino-acid chain: Probable aminomethyltransferase (363 aa).

Belongs to the GcvT family. As to quaternary structure, the glycine cleavage system is composed of four proteins: P, T, L and H.

The enzyme catalyses N(6)-[(R)-S(8)-aminomethyldihydrolipoyl]-L-lysyl-[protein] + (6S)-5,6,7,8-tetrahydrofolate = N(6)-[(R)-dihydrolipoyl]-L-lysyl-[protein] + (6R)-5,10-methylene-5,6,7,8-tetrahydrofolate + NH4(+). Its function is as follows. The glycine cleavage system catalyzes the degradation of glycine. The protein is Probable aminomethyltransferase of Halobacterium salinarum (strain ATCC 29341 / DSM 671 / R1).